A 554-amino-acid polypeptide reads, in one-letter code: Serine/threonine-protein phosphatase 2B catalytic subunit (554 aa).

Residues Asp-119, His-121, and Asp-147 each coordinate Fe cation. Residues Asp-147 and Asn-179 each contribute to the Zn(2+) site. Catalysis depends on His-180, which acts as the Proton donor. Zn(2+) is bound by residues His-228 and His-310. A disordered region spans residues 411-433 (LKESAPTQHKQPAPSENENKADQ). Residues 415–426 (APTQHKQPAPSE) are compositionally biased toward polar residues.

Belongs to the PPP phosphatase family. PP-2B subfamily. As to quaternary structure, composed of two components (A and B), the A component is the catalytic subunit and the B component confers calcium sensitivity. Fe(3+) serves as cofactor. The cofactor is Zn(2+).

It carries out the reaction O-phospho-L-seryl-[protein] + H2O = L-seryl-[protein] + phosphate. The catalysed reaction is O-phospho-L-threonyl-[protein] + H2O = L-threonyl-[protein] + phosphate. Functionally, calcium-dependent, calmodulin-stimulated protein phosphatase. This subunit may have a role in the calmodulin activation of calcineurin. Appears to be involved in cytokinesis, mating, transport, nuclear and spindle pole body positioning, and cell shape. The polypeptide is Serine/threonine-protein phosphatase 2B catalytic subunit (ppb1) (Schizosaccharomyces pombe (strain 972 / ATCC 24843) (Fission yeast)).